Reading from the N-terminus, the 120-residue chain is Protein VraC (120 aa).

In Staphylococcus epidermidis (strain ATCC 35984 / DSM 28319 / BCRC 17069 / CCUG 31568 / BM 3577 / RP62A), this protein is Protein VraC.